An 84-amino-acid polypeptide reads, in one-letter code: MERGYRKTRIGTVTSDKMDKTIVVAVENRVRHPLYGKIIKKTSKFKAHDENNEAKNNDKVLIMETRPLSKDKRWRLVEIVEKAK.

It belongs to the universal ribosomal protein uS17 family. Part of the 30S ribosomal subunit.

In terms of biological role, one of the primary rRNA binding proteins, it binds specifically to the 5'-end of 16S ribosomal RNA. The protein is Small ribosomal subunit protein uS17 of Clostridium kluyveri (strain NBRC 12016).